Consider the following 538-residue polypeptide: Sodium/hydrogen exchanger 1 (538 aa).

Topologically, residues 1 to 19 are cytoplasmic; that stretch reads MLDSLVSKLPSLSTSDHAS. The chain crosses the membrane as a helical span at residues 20–40; the sequence is VVALNLFVALLCACIVLGHLL. The Vacuolar portion of the chain corresponds to 41–45; sequence EENRW. Residues 46-66 traverse the membrane as a helical segment; the sequence is MNESITALLIGLGTGVTILLI. Residues 67-73 are Cytoplasmic-facing; the sequence is SKGKSSH. Residues 74-94 constitute an intramembrane region (helical); the sequence is LLVFSEDLFFIYLLPPIIFNA. Topologically, residues 95–106 are cytoplasmic; it reads GFQVKKKQFFRN. The helical transmembrane segment at 107–127 threads the bilayer; sequence FVTIMLFGAVGTIISCTIISL. Residues 128-146 lie on the Vacuolar side of the membrane; sequence GVTQFFKKLDIGTFDLGDY. 2 consecutive intramembrane regions (helical) follow at residues 147–166 and 172–192; these read LAIG…QVLN and LLYS…VVVF. Residues 193–216 are Vacuolar-facing; the sequence is NAIQSFDLTHLNHEAAFHLLGNFL. A helical membrane pass occupies residues 217 to 237; the sequence is YLFLLSTLLGAATGLISAYVI. Residues 238 to 262 lie on the Cytoplasmic side of the membrane; sequence KKLYFGRHSTDREVALMMLMAYLSY. A helical transmembrane segment spans residues 263–283; the sequence is MLAELFDLSGILTVFFCGIVM. Topologically, residues 284–302 are vacuolar; sequence SHYTWHNVTESSRITTKHT. Asparagine 290 is a glycosylation site (N-linked (GlcNAc...) asparagine). The chain crosses the membrane as a helical span at residues 303-323; the sequence is FATLSFLAETFIFLYVGMDAL. Topologically, residues 324–342 are cytoplasmic; it reads DIDKWRSVSDTPGTSIAVS. The chain crosses the membrane as a helical span at residues 343–363; sequence SILMGLVMVGRAAFVFPLSFL. Over 364–378 the chain is Vacuolar; the sequence is SNLAKKNQSEKINFN. N-linked (GlcNAc...) asparagine glycosylation occurs at asparagine 370. Residues 379–399 traverse the membrane as a helical segment; it reads MQVVIWWSGLMRGAVSMALAY. Over 400-413 the chain is Cytoplasmic; sequence NKFTRAGHTDVRGN. Residues 414–434 form a helical membrane-spanning segment; sequence AIMITSTITVCLFSTVVFGML. At 435-538 the chain is on the vacuolar side; that stretch reads TKPLISYLLP…ERNPPDLSKA (104 aa). Residue asparagine 447 is glycosylated (N-linked (GlcNAc...) asparagine). Residues 496–518 form an interaction with CML18/CAM15 region; that stretch reads RTVHYYWRQFDDSFMRPVFGGRG.

It belongs to the monovalent cation:proton antiporter 1 (CPA1) transporter (TC 2.A.36) family. Calcium and pH-dependent interaction with CML18/CAM15 (increases when pH decreases, better at pH 5.5 than at pH 7.5). In terms of tissue distribution, ubiquitous, with higher levels around vascular tissues and guard cells.

The protein resides in the vacuole membrane. Its subcellular location is the endoplasmic reticulum membrane. The protein localises to the golgi apparatus membrane. The catalysed reaction is Na(+)(in) + H(+)(out) = Na(+)(out) + H(+)(in). The enzyme catalyses K(+)(in) + H(+)(out) = K(+)(out) + H(+)(in). Its function is as follows. Acts in low affinity electroneutral exchange of protons for cations such as Na(+) or K(+) across membranes. Can also exchange Li(+) and Cs(+) with a lower affinity. Involved in vacuolar ion compartmentalization necessary for cell volume regulation and cytoplasmic Na(+) detoxification. Required during leaves expansion, probably to stimulate epidermal cell expansion. Confers competence to grow in high salinity conditions. This is Sodium/hydrogen exchanger 1 (NHX1) from Arabidopsis thaliana (Mouse-ear cress).